Reading from the N-terminus, the 206-residue chain is Probable chemoreceptor glutamine deamidase CheD 1 (206 aa).

Belongs to the CheD family.

The enzyme catalyses L-glutaminyl-[protein] + H2O = L-glutamyl-[protein] + NH4(+). Its function is as follows. Probably deamidates glutamine residues to glutamate on methyl-accepting chemotaxis receptors (MCPs), playing an important role in chemotaxis. This Shewanella oneidensis (strain ATCC 700550 / JCM 31522 / CIP 106686 / LMG 19005 / NCIMB 14063 / MR-1) protein is Probable chemoreceptor glutamine deamidase CheD 1.